The following is a 72-amino-acid chain: Enterobactin biosynthesis protein YbdZ (72 aa).

This sequence belongs to the MbtH-like family.

Functionally, involved in the biosynthesis of the siderophore enterobactin (enterochelin), which is a macrocyclic trimeric lactone of N-(2,3-dihydroxybenzoyl)-serine. Plays a role in the catalytic function of EntF. It is required for adenylation of amino acids in non-ribosomal peptide biosynthesis. The chain is Enterobactin biosynthesis protein YbdZ from Escherichia coli (strain K12).